A 254-amino-acid chain; its full sequence is 5-oxoprolinase subunit A (254 aa).

Belongs to the LamB/PxpA family. As to quaternary structure, forms a complex composed of PxpA, PxpB and PxpC.

It catalyses the reaction 5-oxo-L-proline + ATP + 2 H2O = L-glutamate + ADP + phosphate + H(+). In terms of biological role, catalyzes the cleavage of 5-oxoproline to form L-glutamate coupled to the hydrolysis of ATP to ADP and inorganic phosphate. In Acinetobacter baumannii (strain ATCC 17978 / DSM 105126 / CIP 53.77 / LMG 1025 / NCDC KC755 / 5377), this protein is 5-oxoprolinase subunit A.